We begin with the raw amino-acid sequence, 40 residues long: Large ribosomal subunit protein bL36 (40 aa).

The protein belongs to the bacterial ribosomal protein bL36 family.

This Corynebacterium aurimucosum (strain ATCC 700975 / DSM 44827 / CIP 107346 / CN-1) (Corynebacterium nigricans) protein is Large ribosomal subunit protein bL36.